Consider the following 1046-residue polypeptide: Protein jim lovell (1046 aa).

The disordered stretch occupies residues 54–109; sequence TSDHAPMHSTPPTTPPTPPPLPLNMSQSASAVTEAATPENSLPATPPSEGALAVPS. The span at 65 to 75 shows a compositional bias: pro residues; that stretch reads PTTPPTPPPLP. The region spanning 140 to 205 is the BTB domain; that stretch reads VDVTLVCAET…MYRGEISVPQ (66 aa). Disordered stretches follow at residues 290–342, 355–501, 632–655, 686–719, 758–791, 851–947, and 998–1046; these read LRRK…DAES, AERD…KLQD, PPFGGHNGGHPGNSGPGNGCPGQA, EFGPASPMSLQGPFNAPDGPPHPPSPLPFPGMSS, RDMPGGPPPFLKKKMPRPKGQHSAPRGGPPRSWT, EMLQ…APNA, and DCKS…TGHD. Residues 294 to 303 show a composition bias toward basic and acidic residues; it reads REQESDRDLE. Basic residues predominate over residues 315–324; the sequence is PRRKQARPRR. Residues 365–380 are compositionally biased toward polar residues; sequence QDNSQGEAEKISSSPA. The span at 383–412 shows a compositional bias: basic and acidic residues; the sequence is LVERAKEQKSMKEEGSDQPRSLNENHHQLE. The segment covering 413–432 has biased composition (acidic residues); sequence LDDEDDDDQDHEEEEEQDIE. The span at 433 to 443 shows a compositional bias: basic and acidic residues; sequence ELIHTTNELRR. A compositionally biased stretch (low complexity) spans 445–454; sequence AAAAAANAAA. A compositionally biased stretch (gly residues) spans 636–651; sequence GHNGGHPGNSGPGNGC. A compositionally biased stretch (pro residues) spans 703-714; it reads DGPPHPPSPLPF. The segment covering 768–777 has biased composition (basic residues); it reads LKKKMPRPKG. Residues 781–833 form the HTH psq-type domain; sequence APRGGPPRSWTNTELTEALQHVWNKKMTTSQASRIFGIPYNSLLMYVRGKYGK. Positions 866-881 are enriched in basic and acidic residues; the sequence is KNEKSKERKEKEKDKN. Composition is skewed to low complexity over residues 882-897 and 912-925; these read SMSSNGSGGSANSQGG and LGPMGQLDLDLGLP.

As to expression, initially expressed at blastoderm stage, transient accumulation at dorso-lateral positions of the embryo and differences along the longitudinal axis. At later stages of embryogenesis, expression is found exclusively in neural anlagen. Expressed in 4 posterior-most ventral unpaired median interneurons (VUM) neurons, VUM interneurons and one progeny of the median neuroblast (MNB).

The protein resides in the nucleus. Its function is as follows. Has a regulatory role during midline cell development. The sequence is that of Protein jim lovell (lov) from Drosophila melanogaster (Fruit fly).